A 502-amino-acid polypeptide reads, in one-letter code: ATP synthase subunit beta, chloroplastic (502 aa).

Position 17 is a phosphoserine (S17). 176-183 serves as a coordination point for ATP; that stretch reads GGAGVGKT.

It belongs to the ATPase alpha/beta chains family. In terms of assembly, F-type ATPases have 2 components, CF(1) - the catalytic core - and CF(0) - the membrane proton channel. CF(1) has five subunits: alpha(3), beta(3), gamma(1), delta(1), epsilon(1). CF(0) has four main subunits: a(1), b(1), b'(1) and c(9-12).

The protein localises to the plastid. It localises to the chloroplast thylakoid membrane. The enzyme catalyses ATP + H2O + 4 H(+)(in) = ADP + phosphate + 5 H(+)(out). Its function is as follows. Produces ATP from ADP in the presence of a proton gradient across the membrane. The catalytic sites are hosted primarily by the beta subunits. This is ATP synthase subunit beta, chloroplastic from Lepidium virginicum (Virginia pepperweed).